We begin with the raw amino-acid sequence, 1539 residues long: MEPGCDEFLPPPECPVFEPSWAEFQDPLGYIAKIRPIAEKSGICKIRPPADWQPPFAVEVDNFRFTPRVQRLNELEAQTRVKLNYLDQIAKFWEIQGSSLKIPNVERKILDLYSLSKIVIEEGGYEAICKDRRWARVAQRLHYPPGKNIGSLLRSHYERIIYPYEMFQSGANHVQCNTHPFDNEVKDKEYKPHSIPLRQSVQPSKFSSYSRRAKRLQPDPEPTEEDIEKHPELKKLQIYGPGPKMMGLGLMAKDKDKTVHKKVTCPPTVTVKDEQSGGGNVSSTLLKQHLSLEPCTKTTMQLRKNHSSAQFIDSYICQVCSRGDEDDKLLFCDGCDDNYHIFCLLPPLPEIPRGIWRCPKCILAECKQPPEAFGFEQATQEYSLQSFGEMADSFKSDYFNMPVHMVPTELVEKEFWRLVSSIEEDVTVEYGADIHSKEFGSGFPVSNSKQNLSPEEKEYATSGWNLNVMPVLDQSVLCHINADISGMKVPWLYVGMVFSAFCWHIEDHWSYSINYLHWGEPKTWYGVPSLAAEHLEEVMKMLTPELFDSQPDLLHQLVTLMNPNTLMSHGVPVVRTNQCAGEFVITFPRAYHSGFNQGYNFAEAVNFCTADWLPAGRQCIEHYRRLRRYCVFSHEELICKMAAFPETLDLNLAVAVHKEMFIMVQEERRLRKALLEKGVTEAEREAFELLPDDERQCIKCKTTCFLSALACYDCPDGLVCLSHINDLCKCSSSRQYLRYRYTLDELPTMLHKLKIRAESFDTWANKVRVALEVEDGRKRSFEELRALESEARERRFPNSELLQRLKNCLSEVEACIAQVLGLVSGQVARMDTPQLTLTELRVLLEQMGSLPCAMHQIGDVKDVLEQVEAYQAEAREALATLPSSPGLLRSLLERGQQLGVEVPEAHQLQQQVEQAQWLDEVKQALAPSAHRGSLVIMQGLLVMGAKIASSPSVDKARAELQELLTIAERWEEKAHFCLEARQKHPPATLEAIIRETENIPVHLPNIQALKEALTKAQAWIADVDEIQNGDHYPCLDDLEGLVAVGRDLPVGLEELRQLELQVLTAHSWREKASKTFLKKNSCYTLLEVLCPCADAGSDSTKRSRWMEKALGLYQCDTELLGLSAQDLRDPGSVIVAFKEGEQKEKEGILQLRRTNSAKPSPLAPSLMASSPTSICVCGQVPAGVGVLQCDLCQDWFHGQCVSVPHLLTSPKPSLTSSPLLAWWEWDTKFLCPLCMRSRRPRLETILALLVALQRLPVRLPEGEALQCLTERAIGWQDRARKALASEDVTALLRQLAELRQQLQAKPRPEEASVYTSATACDPIREGSGNNISKVQGLLENGDSVTSPENMAPGKGSDLELLSSLLPQLTGPVLELPEAIRAPLEELMMEGDLLEVTLDENHSIWQLLQAGQPPDLDRIRTLLELEKFEHQGSRTRSRALERRRRRQKVDQGRNVENLVQQELQSKRARSSGIMSQVGREEEHYQEKADRENMFLTPSTDHSPFLKGNQNSLQHKDSGSSAACPSLMPLLQLSYSDEQQL.

The JmjN domain occupies 14–55 (CPVFEPSWAEFQDPLGYIAKIRPIAEKSGICKIRPPADWQPP). The region spanning 79–169 (TRVKLNYLDQ…IIYPYEMFQS (91 aa)) is the ARID domain. The interval 192–228 (PHSIPLRQSVQPSKFSSYSRRAKRLQPDPEPTEEDIE) is disordered. Polar residues predominate over residues 197 to 210 (LRQSVQPSKFSSYS). Glycyl lysine isopeptide (Lys-Gly) (interchain with G-Cter in SUMO2) cross-links involve residues lysine 205, lysine 229, lysine 244, and lysine 272. 2 positions are modified to phosphoserine: serine 291 and serine 307. The segment at 316 to 362 (ICQVCSRGDEDDKLLFCDGCDDNYHIFCLLPPLPEIPRGIWRCPKCI) adopts a PHD-type 1 zinc-finger fold. Tyrosine 430 contributes to the 2-oxoglutarate binding site. One can recognise a JmjC domain in the interval 458–624 (EYATSGWNLN…AGRQCIEHYR (167 aa)). 2 residues coordinate Fe cation: histidine 504 and glutamate 506. 2-oxoglutarate-binding residues include serine 512, asparagine 514, and lysine 522. Residue histidine 592 participates in Fe cation binding. The segment at 697–749 (CIKCKTTCFLSALACYDCPDGLVCLSHINDLCKCSSSRQYLRYRYTLDELPTM) adopts a C5HC2 zinc-finger fold. A Phosphoserine modification is found at serine 884. The PHD-type 2 zinc finger occupies 1174-1235 (ICVCGQVPAG…DTKFLCPLCM (62 aa)). Serine 1346 carries the post-translational modification Phosphoserine. Residues 1429–1521 (HQGSRTRSRA…QHKDSGSSAA (93 aa)) form a disordered region. The segment covering 1432-1446 (SRTRSRALERRRRRQ) has biased composition (basic residues). The segment covering 1477 to 1491 (GREEEHYQEKADREN) has biased composition (basic and acidic residues). The segment covering 1494-1521 (LTPSTDHSPFLKGNQNSLQHKDSGSSAA) has biased composition (polar residues).

Belongs to the JARID1 histone demethylase family. In terms of assembly, interacts with PCGF6, MSH5, ZMYND8, AR. L-ascorbate serves as cofactor. Requires Fe(2+) as cofactor. As to expression, expression is highly down-regulated in metastatic prostate tumors.

It is found in the nucleus. The catalysed reaction is N(6),N(6),N(6)-trimethyl-L-lysyl(4)-[histone H3] + 3 2-oxoglutarate + 3 O2 = L-lysyl(4)-[histone H3] + 3 formaldehyde + 3 succinate + 3 CO2. Functionally, histone demethylase that specifically demethylates 'Lys-4' of histone H3, thereby playing a central role in histone code. Does not demethylate histone H3 'Lys-9', H3 'Lys-27', H3 'Lys-36', H3 'Lys-79' or H4 'Lys-20'. Demethylates trimethylated and dimethylated but not monomethylated H3 'Lys-4'. May play a role in spermatogenesis. Involved in transcriptional repression of diverse metastasis-associated genes; in this function seems to cooperate with ZMYND8. Suppresses prostate cancer cell invasion. Regulates androgen receptor (AR) transcriptional activity by demethylating H3K4me3 active transcription marks. The chain is Lysine-specific demethylase 5D (KDM5D) from Homo sapiens (Human).